The following is a 121-amino-acid chain: Large ribosomal subunit protein bL12 (121 aa).

It belongs to the bacterial ribosomal protein bL12 family. In terms of assembly, homodimer. Part of the ribosomal stalk of the 50S ribosomal subunit. Forms a multimeric L10(L12)X complex, where L10 forms an elongated spine to which 2 to 4 L12 dimers bind in a sequential fashion. Binds GTP-bound translation factors.

Forms part of the ribosomal stalk which helps the ribosome interact with GTP-bound translation factors. Is thus essential for accurate translation. The sequence is that of Large ribosomal subunit protein bL12 from Shewanella piezotolerans (strain WP3 / JCM 13877).